A 330-amino-acid polypeptide reads, in one-letter code: DNA-directed RNA polymerase subunit alpha (330 aa).

The segment at Met-1–Lys-232 is alpha N-terminal domain (alpha-NTD). Residues Glu-248–Glu-330 form an alpha C-terminal domain (alpha-CTD) region.

Belongs to the RNA polymerase alpha chain family. Homodimer. The RNAP catalytic core consists of 2 alpha, 1 beta, 1 beta' and 1 omega subunit. When a sigma factor is associated with the core the holoenzyme is formed, which can initiate transcription.

It catalyses the reaction RNA(n) + a ribonucleoside 5'-triphosphate = RNA(n+1) + diphosphate. Its function is as follows. DNA-dependent RNA polymerase catalyzes the transcription of DNA into RNA using the four ribonucleoside triphosphates as substrates. This Bacteroides fragilis (strain ATCC 25285 / DSM 2151 / CCUG 4856 / JCM 11019 / LMG 10263 / NCTC 9343 / Onslow / VPI 2553 / EN-2) protein is DNA-directed RNA polymerase subunit alpha.